The primary structure comprises 287 residues: MAIRTFRPYTPGTRTRVVTDFNELTGRKPERSLVVSKHRLKGRNNRGVITCRHRGGGHKRLYRIVDFRRNKHDVPAKVAAIHYDPHRNARLALLFYSDGEKRYILAPAGIAIGQEVISGPKVPIETGNAMPLSAIPLGSSVHCVELYAGRGGQMVRSAGASAQVMAKEGDYVALRLPSTEVRLIRRECYATLGEVGNSEIRNTSLGKAGRRRWLGRRPQVRGSVMNPCDHPHGGGEGRAPVGRAGPVTPWGKPALGLKTRKRNKPSNRFVLRKRRRVSKRSRGGRDS.

The disordered stretch occupies residues 221–287 (RGSVMNPCDH…SKRSRGGRDS (67 aa)). Residues 258 to 287 (KTRKRNKPSNRFVLRKRRRVSKRSRGGRDS) show a composition bias toward basic residues.

Belongs to the universal ribosomal protein uL2 family. In terms of assembly, part of the 50S ribosomal subunit. Forms a bridge to the 30S subunit in the 70S ribosome.

Its function is as follows. One of the primary rRNA binding proteins. Required for association of the 30S and 50S subunits to form the 70S ribosome, for tRNA binding and peptide bond formation. It has been suggested to have peptidyltransferase activity; this is somewhat controversial. Makes several contacts with the 16S rRNA in the 70S ribosome. This Prochlorococcus marinus (strain MIT 9211) protein is Large ribosomal subunit protein uL2.